Reading from the N-terminus, the 283-residue chain is Bifunctional protein FolD (283 aa).

NADP(+) contacts are provided by residues 165 to 167 (GRS), S190, and V231.

Belongs to the tetrahydrofolate dehydrogenase/cyclohydrolase family. In terms of assembly, homodimer.

It catalyses the reaction (6R)-5,10-methylene-5,6,7,8-tetrahydrofolate + NADP(+) = (6R)-5,10-methenyltetrahydrofolate + NADPH. The enzyme catalyses (6R)-5,10-methenyltetrahydrofolate + H2O = (6R)-10-formyltetrahydrofolate + H(+). It functions in the pathway one-carbon metabolism; tetrahydrofolate interconversion. Catalyzes the oxidation of 5,10-methylenetetrahydrofolate to 5,10-methenyltetrahydrofolate and then the hydrolysis of 5,10-methenyltetrahydrofolate to 10-formyltetrahydrofolate. The sequence is that of Bifunctional protein FolD from Bacillus pumilus (strain SAFR-032).